We begin with the raw amino-acid sequence, 308 residues long: Testis-specific Y-encoded protein 8 (308 aa).

This sequence belongs to the nucleosome assembly protein (NAP) family.

It localises to the cytoplasm. The protein localises to the nucleus. Functionally, may be involved in sperm differentiation and proliferation. This chain is Testis-specific Y-encoded protein 8 (TSPY8), found in Homo sapiens (Human).